Here is a 292-residue protein sequence, read N- to C-terminus: Small ribosomal subunit biogenesis GTPase RsgA (292 aa).

The 158-residue stretch at 64–221 folds into the CP-type G domain; the sequence is RSELFRPAVA…LVDTPGFSSL (158 aa). GTP is bound by residues 113–116 and 164–172; these read NKMD and GPSGVGKST. Residues Cys-245, Cys-250, His-252, and Cys-258 each coordinate Zn(2+).

Belongs to the TRAFAC class YlqF/YawG GTPase family. RsgA subfamily. In terms of assembly, monomer. Associates with 30S ribosomal subunit, binds 16S rRNA. It depends on Zn(2+) as a cofactor.

It localises to the cytoplasm. In terms of biological role, one of several proteins that assist in the late maturation steps of the functional core of the 30S ribosomal subunit. Helps release RbfA from mature subunits. May play a role in the assembly of ribosomal proteins into the subunit. Circularly permuted GTPase that catalyzes slow GTP hydrolysis, GTPase activity is stimulated by the 30S ribosomal subunit. This is Small ribosomal subunit biogenesis GTPase RsgA from Clostridium botulinum (strain Kyoto / Type A2).